Reading from the N-terminus, the 377-residue chain is 23S rRNA (uracil(747)-C(5))-methyltransferase RlmC (377 aa).

[4Fe-4S] cluster is bound by residues cysteine 3, cysteine 11, cysteine 14, and cysteine 87. S-adenosyl-L-methionine is bound by residues glutamine 212, phenylalanine 241, glutamate 262, and asparagine 307. The active-site Nucleophile is cysteine 334.

It belongs to the class I-like SAM-binding methyltransferase superfamily. RNA M5U methyltransferase family. RlmC subfamily.

The enzyme catalyses uridine(747) in 23S rRNA + S-adenosyl-L-methionine = 5-methyluridine(747) in 23S rRNA + S-adenosyl-L-homocysteine + H(+). In terms of biological role, catalyzes the formation of 5-methyl-uridine at position 747 (m5U747) in 23S rRNA. This is 23S rRNA (uracil(747)-C(5))-methyltransferase RlmC from Proteus mirabilis (strain HI4320).